The chain runs to 600 residues: Probable translation initiation factor IF-2 (600 aa).

The tr-type G domain maps to 13 to 228 (LRTPIVAVLG…VLMGLAQRYM (216 aa)). Residues 22-29 (GHVDHGKT) are G1. 22 to 29 (GHVDHGKT) lines the GTP pocket. Residues 47–51 (AITQH) form a G2 region. The interval 84 to 87 (DTPG) is G3. Residues 84–88 (DTPGH) and 138–141 (NKID) each bind GTP. A G4 region spans residues 138 to 141 (NKID). The disordered stretch occupies residues 140-162 (IDTTPGWNPNPDAPVQGTYDDQS). Residues 206–208 (SAE) are G5.

Belongs to the TRAFAC class translation factor GTPase superfamily. Classic translation factor GTPase family. IF-2 subfamily.

Functionally, function in general translation initiation by promoting the binding of the formylmethionine-tRNA to ribosomes. Seems to function along with eIF-2. This Halobacterium salinarum (strain ATCC 700922 / JCM 11081 / NRC-1) (Halobacterium halobium) protein is Probable translation initiation factor IF-2.